The primary structure comprises 88 residues: Acylphosphatase (88 aa).

An Acylphosphatase-like domain is found at 3–88; that stretch reads AARFVVSGVV…VPPTEDFVTG (86 aa). Residues arginine 18 and asparagine 36 contribute to the active site.

This sequence belongs to the acylphosphatase family.

It catalyses the reaction an acyl phosphate + H2O = a carboxylate + phosphate + H(+). The polypeptide is Acylphosphatase (acyP) (Xanthomonas euvesicatoria pv. vesicatoria (strain 85-10) (Xanthomonas campestris pv. vesicatoria)).